We begin with the raw amino-acid sequence, 253 residues long: 5'/3'-nucleotidase SurE (253 aa).

The a divalent metal cation site is built by Asp-8, Asp-9, Ser-39, and Asn-92.

The protein belongs to the SurE nucleotidase family. The cofactor is a divalent metal cation.

It localises to the cytoplasm. The enzyme catalyses a ribonucleoside 5'-phosphate + H2O = a ribonucleoside + phosphate. It catalyses the reaction a ribonucleoside 3'-phosphate + H2O = a ribonucleoside + phosphate. It carries out the reaction [phosphate](n) + H2O = [phosphate](n-1) + phosphate + H(+). Nucleotidase with a broad substrate specificity as it can dephosphorylate various ribo- and deoxyribonucleoside 5'-monophosphates and ribonucleoside 3'-monophosphates with highest affinity to 3'-AMP. Also hydrolyzes polyphosphate (exopolyphosphatase activity) with the preference for short-chain-length substrates (P20-25). Might be involved in the regulation of dNTP and NTP pools, and in the turnover of 3'-mononucleotides produced by numerous intracellular RNases (T1, T2, and F) during the degradation of various RNAs. This Escherichia coli O7:K1 (strain IAI39 / ExPEC) protein is 5'/3'-nucleotidase SurE.